Consider the following 479-residue polypeptide: 5-hydroxytryptamine receptor 2B (479 aa).

Residues 1 to 55 (MASSYKMSEQSTTSEHILQKTCDHLILTNRSGLETDSVAEEMKQTVEGQGHTVHW) lie on the Extracellular side of the membrane. Residue Asn29 is glycosylated (N-linked (GlcNAc...) asparagine). Residues 56–78 (AALLILAVIIPTIGGNILVILAV) form a helical membrane-spanning segment. The Cytoplasmic segment spans residues 79-89 (ALEKRLQYATN). A helical membrane pass occupies residues 90–112 (YFLMSLAIADLLVGLFVMPIALL). Residues 113–128 (TIMFEAIWPLPLALCP) are Extracellular-facing. Residues Cys127 and Cys206 are joined by a disulfide bond. A helical transmembrane segment spans residues 129 to 150 (AWLFLDVLFSTASIMHLCAISL). 2 residues coordinate ergotamine: Asp134 and Thr139. The DRY motif; important for ligand-induced conformation changes signature appears at 151–153 (DRY). The Cytoplasmic segment spans residues 151-170 (DRYIAIKKPIQANQCNSRAT). Residues 171-191 (AFIKITVVWLISIGIAIPVPI) form a helical membrane-spanning segment. Residues 192-215 (KGIETDVINPHNVTCELTKDRFGS) are Extracellular-facing. Ergotamine is bound at residue Leu208. A [DE]RFG motif; may stabilize a conformation that preferentially activates signaling via beta-arrestin family members motif is present at residues 211 to 214 (DRFG). Residues 216-238 (FMVFGSLAAFFAPLTIMVVTYFL) form a helical membrane-spanning segment. Topologically, residues 239–323 (TIHTLQKKAY…TISNEQRASK (85 aa)) are cytoplasmic. A helical membrane pass occupies residues 324–344 (ALGVVFFLFLLMWCPFFITNL). Residues 345 to 359 (TLALCDSCNQTTLKT) lie on the Extracellular side of the membrane. Residues Cys349 and Cys352 are joined by a disulfide bond. A helical transmembrane segment spans residues 360 to 381 (LLEIFVWIGYVSSGVNPLIYTL). Residues 375–379 (NPLIY) carry the NPxxY motif; important for ligand-induced conformation changes and signaling motif. Topologically, residues 382–479 (FNKTFREAFG…DKAEEQVSYI (98 aa)) are cytoplasmic. Cys396 carries S-palmitoyl cysteine lipidation. A PDZ-binding motif is present at residues 477 to 479 (SYI).

This sequence belongs to the G-protein coupled receptor 1 family. In terms of assembly, interacts (via C-terminus) with MPDZ. As to expression, ubiquitous. Detected in intestine, heart, skeletal muscle, testis, urinary bladder, stomach, liver, lung, brain and kidney. Detected in osteoblasts. Detected in the raphe nucleus in the brain, in dorsal root ganglion neurons, the brain stem, cerebellum and spinal cord. Detected in interstitial cells of Cajal in the small intestine.

The protein resides in the cell membrane. It localises to the synapse. Its subcellular location is the synaptosome. In terms of biological role, G-protein coupled receptor for 5-hydroxytryptamine (serotonin). Also functions as a receptor for various ergot alkaloid derivatives and psychoactive substances. Ligand binding causes a conformation change that triggers signaling via guanine nucleotide-binding proteins (G proteins) and modulates the activity of downstream effectors. HTR2B is coupled to G(q)/G(11) G alpha proteins and activates phospholipase C-beta, releasing diacylglycerol (DAG) and inositol 1,4,5-trisphosphate (IP3) second messengers that modulate the activity of phosphatidylinositol 3-kinase and promote the release of Ca(2+) ions from intracellular stores, respectively. Beta-arrestin family members inhibit signaling via G proteins and mediate activation of alternative signaling pathways. Plays a role in the regulation of dopamine and 5-hydroxytryptamine release, 5-hydroxytryptamine uptake and in the regulation of extracellular dopamine and 5-hydroxytryptamine levels, and thereby affects neural activity. May play a role in the perception of pain. Plays a role in the regulation of behavior, including impulsive behavior. Required for normal proliferation of embryonic cardiac myocytes and normal heart development. Protects cardiomyocytes against apoptosis. Plays a role in the adaptation of pulmonary arteries to chronic hypoxia. Plays a role in vasoconstriction. Required for normal osteoblast function and proliferation, and for maintaining normal bone density. Required for normal proliferation of the interstitial cells of Cajal in the intestine. The polypeptide is 5-hydroxytryptamine receptor 2B (Htr2b) (Mus musculus (Mouse)).